A 260-amino-acid chain; its full sequence is MATPPKRFCSSPSTSSEGTRIKKISIEGNIAAGKSTFVNILKQVCEDWEVVPEPVARWCNVQSTQDEFEELTTSQKSGGNVLQMMYEKPERWSFIFQSYACLSRIRAQLASLNGSLRDAEKPVLFFERSVYSDRYIFASNLYESDCMNETEWTIYQDWHDWMNSQFGQSLELDGIIYLRATPEKCLNRIYIRGRDEEQGIPLEYLEKLHYKHESWLLHRTLKTNFEYLQEVPILTLDVNLDFKDKEESLVEKVKEFLSTT.

Phosphoserine; by CK1 is present on residues Ser-11 and Ser-15. 28–36 contributes to the ATP binding site; it reads GNIAAGKST. Residue Glu-53 coordinates substrate. Thr-72 carries the phosphothreonine; by CK1 modification. Ser-74 carries the phosphoserine; by CK1 modification. Substrate-binding residues include Tyr-86 and Gln-97. The active-site Proton acceptor is the Glu-127. Positions 128 and 133 each coordinate substrate. Residue 188–192 coordinates ATP; the sequence is RIYIR. Glu-197 provides a ligand contact to substrate. An ATP-binding site is contributed by 240–242; it reads LDF.

The protein belongs to the DCK/DGK family. Homodimer. Post-translationally, phosphorylated and activated in vitro upon phosphorylation at Ser-74 by CSNK1D/CK1.

Its subcellular location is the nucleus. The catalysed reaction is 2'-deoxycytidine + a ribonucleoside 5'-triphosphate = dCMP + a ribonucleoside 5'-diphosphate + H(+). It catalyses the reaction 2'-deoxyadenosine + ATP = dAMP + ADP + H(+). The enzyme catalyses 2'-deoxyguanosine + ATP = dGMP + ADP + H(+). Functionally, phosphorylates the deoxyribonucleosides deoxycytidine, deoxyguanosine and deoxyadenosine. The protein is Deoxycytidine kinase (Dck) of Rattus norvegicus (Rat).